Here is a 123-residue protein sequence, read N- to C-terminus: Protein Wnt-3b (123 aa).

Residue S1 is the site of O-palmitoleoyl serine; by PORCN attachment. An intrachain disulfide couples C89 to C104. N90 carries N-linked (GlcNAc...) asparagine glycosylation.

The protein belongs to the Wnt family. In terms of processing, palmitoleoylation is required for efficient binding to frizzled receptors. Depalmitoleoylation leads to Wnt signaling pathway inhibition.

It is found in the secreted. The protein resides in the extracellular space. Its subcellular location is the extracellular matrix. Functionally, ligand for members of the frizzled family of seven transmembrane receptors. Probable developmental protein. May be a signaling molecule which affects the development of discrete regions of tissues. Is likely to signal over only few cell diameters. The protein is Protein Wnt-3b (WNT-3B) of Plethodon jordani (Red-cheeked salamander).